A 270-amino-acid chain; its full sequence is Bacterial microcompartment shell protein PduB (270 aa).

The tract at residues 6–18 (LVEQIMAQVIARV) is probable helix that binds cargo to the BMC shell. BMC circularly permuted domains follow at residues 47-152 (EFVG…DRTF) and 154-258 (DVYG…LATL).

Belongs to the EutL/PduB family. Homotrimerizes to form a pseudohexamer with a central pore. The trimers pack into an array. In purified BMCs seen as a 28.0 kDa and 25.0 kDa form, both of which have been N-terminally sequenced and whose N-fMet is removed; the smaller form is called PduB'.

The protein resides in the bacterial microcompartment. The protein operates within polyol metabolism; 1,2-propanediol degradation. Its function is as follows. The two proteins produced are among the major shell proteins of the bacterial microcompartment (BMC) dedicated to 1,2-propanediol (1,2-PD) degradation. Required for structural integrity of BMCs and to mitigate propionaldehyde toxicity. The N-terminal 13 residues are important for correct assembly of the BMC shell. The isolated BMC shell component protein ratio for J:A:B':B:K:T:U is approximately 15:10:7:6:1:1:2. The N-terminus of the long form (PduB) is required for correct formation of BMCs, deletions in the first 37 residues have substantially reduced levels of the major lumen enzymes. May play a major role in binding the enzyme contents to the shell. In terms of biological role, the 1,2-PD-specific bacterial microcompartment (BMC) concentrates low levels of 1,2-PD catabolic enzymes, concentrates volatile reaction intermediates thus enhancing pathway flux and keeps the level of toxic, mutagenic propionaldehyde low. This is Bacterial microcompartment shell protein PduB from Salmonella typhimurium (strain LT2 / SGSC1412 / ATCC 700720).